A 439-amino-acid polypeptide reads, in one-letter code: Probable aspartic proteinase GIP2 (439 aa).

An N-terminal signal peptide occupies residues 1 to 23 (MASSCCLHAILLCSLLFITSTTA). The region spanning 47 to 420 (YLTQIQQRTP…DLARSRLGFT (374 aa)) is the Peptidase A1 domain. Residues asparagine 116, asparagine 280, asparagine 323, and asparagine 434 are each glycosylated (N-linked (GlcNAc...) asparagine).

The protein belongs to the peptidase A1 family. In terms of assembly, interacts with the Phytophtora parasitica xyloglucanase XEG1 and xyloglucanase-like XLP1. Possesses stronger binding affinity with XLP1, a truncated paralog of P.parasitica XEG1 which has no enzyme activity.

The protein localises to the secreted. It localises to the extracellular space. It is found in the apoplast. Its function is as follows. Involved in plant defense against Phytophtora parasitica. Contributes positively to Nicotiana resistance against P.parasitica. Binds the P.parasitica xyloglucanase XEG1 and inhibits its cell wall degrading enzyme activity and its contribution as P.parasitica virulence factor. XEG1 acts as an important virulence factor during P.parasitica infection but also acts as a pathogen-associated molecular pattern (PAMP) in Nictotiana species, where it can trigger defense responses including cell death. (Microbial infection) Possesses stronger binding affinity with XLP1, a truncated paralog of P.parasitica XEG1 which has no enzyme activity. Is impaired in its inhibitor activity towards the P.parasitica xyloglucanase XEG1 when hijacked by XLP1 binding. The chain is Probable aspartic proteinase GIP2 from Nicotiana benthamiana.